We begin with the raw amino-acid sequence, 631 residues long: Guanylate-binding protein 4 (631 aa).

One can recognise a GB1/RHD3-type G domain in the interval S33–K283. Residues G43–S50 and D103–L107 contribute to the GTP site. Residues I492–N592 are a coiled coil.

The protein belongs to the TRAFAC class dynamin-like GTPase superfamily. GB1/RHD3 GTPase family. GB1 subfamily. In terms of assembly, heterodimer with other family members, including GBP1, GBP2 and GBP5. Dimerization regulates subcellular location. Interacts with IRF7; preventing interaction between TRAF6 and IRF7, resulting in impaired TRAF6-mediated IRF7 ubiquitination. Mainly expressed in organs of the immune system, such as spleen and lymph nodes.

Its subcellular location is the golgi apparatus membrane. It localises to the cytoplasm. The protein resides in the nucleus. It is found in the perinuclear region. It carries out the reaction GTP + H2O = GDP + phosphate + H(+). Its function is as follows. Interferon (IFN)-inducible GTPase that plays important roles in innate immunity against a diverse range of bacterial, viral and protozoan pathogens. Negatively regulates the antiviral response by inhibiting activation of IRF7 transcription factor. The chain is Guanylate-binding protein 4 from Mus musculus (Mouse).